The sequence spans 441 residues: Protein MONOCULM 1 (441 aa).

Residues 1–33 (MLRSLHSSSSSDTDNNSGGCKNNGGGGGEAAAA) form a disordered region. Low complexity predominate over residues 7–20 (SSSSSDTDNNSGGC). The segment covering 21–33 (KNNGGGGGEAAAA) has biased composition (gly residues). The GRAS domain maps to 41-437 (RAVAAAAPST…RPLLSVSAWQ (397 aa)). The leucine repeat I (LRI) stretch occupies residues 48–126 (PSTRDLLLAC…GAARPASSGA (79 aa)). Residues 127–195 (YLAFNQIAPF…LGPPEVRVTG (69 aa)) form a VHIID region. Positions 158 to 162 (VHILD) match the VHIID motif. Residues 205 to 256 (RTGNRLRAFARSIHLPFHFTPLLLSCATTAPHHVAGTSTGAAAAASTAAAAT) are leucine repeat II (LRII). The interval 266–361 (LAVNCVMFLH…QEVLGREIEA (96 aa)) is PFYRE. The tract at residues 364–437 (GPSGGRWWRG…RPLLSVSAWQ (74 aa)) is SAW.

The protein belongs to the GRAS family. As to expression, expressed in a small number of epidermal or subepidermal cells at the leaf axils, in axillary meristems and the entire tiller buds. Undetected in the shoot apical meristem.

The protein resides in the nucleus. In terms of biological role, putative transcription regulator that controls rice tillering by initiating axillary buds and promoting their outgrowth. Rice tiller is a specialized grain-bearing branch that is formed on the unelongated basal internode and grows independently of the mother stem (culm) by means of its own adventitious roots. The polypeptide is Protein MONOCULM 1 (Oryza sativa subsp. japonica (Rice)).